We begin with the raw amino-acid sequence, 288 residues long: Elongation factor Ts (288 aa).

Residues 82-85 (TDFV) are involved in Mg(2+) ion dislocation from EF-Tu.

The protein belongs to the EF-Ts family.

The protein resides in the cytoplasm. Functionally, associates with the EF-Tu.GDP complex and induces the exchange of GDP to GTP. It remains bound to the aminoacyl-tRNA.EF-Tu.GTP complex up to the GTP hydrolysis stage on the ribosome. The polypeptide is Elongation factor Ts (Chlorobium luteolum (strain DSM 273 / BCRC 81028 / 2530) (Pelodictyon luteolum)).